Here is a 478-residue protein sequence, read N- to C-terminus: Sphingomyelin synthase-related protein 1 (478 aa).

The segment covering 1–22 (MPAGSRAGSRLRSGSLPRPSRL) has biased composition (low complexity). A disordered region spans residues 1 to 65 (MPAGSRAGSR…TAEEVEKEMA (65 aa)). An SAM domain is found at 75–141 (WTTKHVAVWL…MLSVRKLQKI (67 aa)). The next 6 helical transmembrane spans lie at 216–236 (ILSCVYVFIVFGFTSFIMVIV), 264–284 (FSMTEVCGVILCYIWILVLLL), 295–315 (LCSLMGTVFLLRCFTMFVTSL), 341–361 (AIWSGFGMTLTGVHTCGDYMF), 385–405 (FLHTLSWVLNLFGIFFILAAH), and 410–430 (IDVFIAFYITTRLFLYYHTLA). Over 431 to 478 (NTRAYHQSRRARIWFPMFSFFECNVNGTVPNEYCWPFSKPAIMKRLIG) the chain is Cytoplasmic.

This sequence belongs to the sphingomyelin synthase family. In terms of tissue distribution, expressed ubiquitously with highest levels in macrophages and testis.

The protein resides in the endoplasmic reticulum membrane. The catalysed reaction is an N-acylsphing-4-enine + a 1,2-diacyl-sn-glycero-3-phosphoethanolamine = an N-acylsphing-4-enine 1-phosphoethanolamine + a 1,2-diacyl-sn-glycerol. It catalyses the reaction an N-acylsphinganine + a 1,2-diacyl-sn-glycero-3-phosphoethanolamine = an N-acylsphinganine-1-phosphoethanolamine + a 1,2-diacyl-sn-glycerol. It carries out the reaction an N-acyl-(4R)-4-hydroxysphinganine + a 1,2-diacyl-sn-glycero-3-phosphoethanolamine = an N-acyl-(4R)-4-hydroxysphinganine-1-phosphoethanolamine + a 1,2-diacyl-sn-glycerol. The enzyme catalyses N-hexadecanoylsphinganine + a 1,2-diacyl-sn-glycero-3-phosphoethanolamine = N-hexadecanoyl-sphinganine-1-phosphoethanolamine + a 1,2-diacyl-sn-glycerol. The catalysed reaction is N-hexadecanoyl-(4R)-hydroxysphinganine + a 1,2-diacyl-sn-glycero-3-phosphoethanolamine = N-hexadecanoyl-(4R)-hydroxysphinganine-1-phosphoethanolamine + a 1,2-diacyl-sn-glycerol. Its pathway is sphingolipid metabolism. Functionally, synthesizes sphingolipids through transfer of a phosphatidyl head group from a glycerophospholipid on to the primary hydroxyl of a ceramide in the lumen of the endoplasmic reticulum. Catalyzes the synthesis of ceramide phosphoethanolamines (CPEs) (such as N-acylsphing-4-enine 1-phosphoethanolamine) by transferring phosphoethanolamine head group, which is smaller and more hydrophilic than the phosphocholine (PC) headgroup transferred in the canonical sphingomyelin synthesis (SMS) reaction by SMS1 or SMS2, from a phosphatidylethanolamine (1,2-diacyl-sn-glycero-3-phosphoethanolamine, PE) to a ceramide (such as N-acylsphing-4-enine). The larger PC prevents an efficient fit in the enzyme's catalytic pocket, leading to little or no SMS activity. In vitro, in the absence of ceramide, it has PLC activity with preference for phosphatidylinositol and phosphatidic acid, but also hydrolyzes phosphatidylethanolamine. The protein is Sphingomyelin synthase-related protein 1 of Mus musculus (Mouse).